Consider the following 731-residue polypeptide: Bifunctional trehalose-6-phosphate synthase/phosphatase (731 aa).

The interval 1-464 is alpha,alpha-trehalose-phosphate synthase; the sequence is MRLIVVSNRL…WGTDFIYSLI (464 aa). Residue Arg-9 coordinates D-glucose 6-phosphate. Residue 25–26 coordinates UDP-alpha-D-glucose; sequence GG. 2 residues coordinate D-glucose 6-phosphate: Tyr-89 and Asp-143. Arg-276 and Lys-281 together coordinate UDP-alpha-D-glucose. Arg-314 serves as a coordination point for D-glucose 6-phosphate. 379 to 383 lines the UDP-alpha-D-glucose pocket; sequence LVAKE. Residues 465–731 are trehalose-6-phosphate phosphatase; that stretch reads SAKSAREEVE…RSLLEQLRPP (267 aa). Catalysis depends on Asp-503, which acts as the Nucleophile. Mg(2+) contacts are provided by Asp-503, Asp-505, and Asp-684. Alpha,alpha-trehalose 6-phosphate is bound at residue 503–505; sequence DYD.

This sequence in the N-terminal section; belongs to the glycosyltransferase 20 family. It in the C-terminal section; belongs to the trehalose phosphatase family. In terms of assembly, may interact with the putative glycosyltransferase (GT) TTX_1305. TTX_1305 is required for the trehalose-6-phosphate synthase activity of tpsp. The cofactor is Mg(2+).

The enzyme catalyses D-glucose 6-phosphate + UDP-alpha-D-glucose = alpha,alpha-trehalose 6-phosphate + UDP + H(+). The catalysed reaction is alpha,alpha-trehalose 6-phosphate + H2O = alpha,alpha-trehalose + phosphate. It participates in glycan biosynthesis; trehalose biosynthesis. Its function is as follows. Bifunctional enzyme which catalyzes the transfer of glucose from UDP-alpha-D-glucose to glucose-6-phosphate to form trehalose-6-phosphate (Tre6P) and removes the phosphate from Tre6P to produce free trehalose. The protein is Bifunctional trehalose-6-phosphate synthase/phosphatase of Thermoproteus tenax (strain ATCC 35583 / DSM 2078 / JCM 9277 / NBRC 100435 / Kra 1).